A 662-amino-acid chain; its full sequence is Protein Aster-C (662 aa).

The tract at residues 1–34 is disordered; sequence MEGAPTVRQVMNEGDSSLATELQEDVEENPSPTV. The 68-residue stretch at 69 to 136 folds into the GRAM domain; the sequence is EEYRRQFTHL…KNITFMTKEK (68 aa). Disordered regions lie at residues 212-237 and 250-284; these read SIEDVRPRSPGRSSLDDSGERDEKLS and VSETESFDGNSSKGGLGKEESQNEKQTKKSLLPTL. Basic and acidic residues predominate over residues 265-276; sequence LGKEESQNEKQT. Residues 326-497 enclose the VASt domain; sequence HGRLFINRIF…DLLIEESILN (172 aa). Residues 557–577 form a helical membrane-spanning segment; the sequence is LIVVMSIFVLLLVLLNVTLFL.

Its subcellular location is the endoplasmic reticulum membrane. It is found in the cell membrane. Functionally, cholesterol transporter that mediates non-vesicular transport of cholesterol from the plasma membrane (PM) to the endoplasmic reticulum (ER). Contains unique domains for binding cholesterol and the PM, thereby serving as a molecular bridge for the transfer of cholesterol from the PM to the ER. Plays a crucial role in cholesterol homeostasis and has the unique ability to localize to the PM based on the level of membrane cholesterol. In lipid-poor conditions localizes to the ER membrane and in response to excess cholesterol in the PM is recruited to the endoplasmic reticulum-plasma membrane contact sites (EPCS) which is mediated by the GRAM domain. At the EPCS, the sterol-binding VASt/ASTER domain binds to the cholesterol in the PM and facilitates its transfer from the PM to ER. In Pongo abelii (Sumatran orangutan), this protein is Protein Aster-C (GRAMD1C).